The sequence spans 301 residues: 4-hydroxy-tetrahydrodipicolinate synthase (301 aa).

A pyruvate-binding site is contributed by Thr-46. Tyr-134 (proton donor/acceptor) is an active-site residue. The Schiff-base intermediate with substrate role is filled by Lys-162. Ile-203 lines the pyruvate pocket.

This sequence belongs to the DapA family. Homotetramer; dimer of dimers.

It localises to the cytoplasm. The enzyme catalyses L-aspartate 4-semialdehyde + pyruvate = (2S,4S)-4-hydroxy-2,3,4,5-tetrahydrodipicolinate + H2O + H(+). It participates in amino-acid biosynthesis; L-lysine biosynthesis via DAP pathway; (S)-tetrahydrodipicolinate from L-aspartate: step 3/4. Catalyzes the condensation of (S)-aspartate-beta-semialdehyde [(S)-ASA] and pyruvate to 4-hydroxy-tetrahydrodipicolinate (HTPA). The chain is 4-hydroxy-tetrahydrodipicolinate synthase from Anaplasma marginale (strain St. Maries).